We begin with the raw amino-acid sequence, 205 residues long: Keratin-associated protein 4-6 (205 aa).

30 consecutive repeat copies span residues 20–24, 25–29, 30–34, 35–39, 40–44, 45–49, 50–54, 55–59, 60–64, 65–68, 69–73, 74–78, 79–83, 84–88, 89–93, 94–98, 99–103, 104–108, 114–118, 119–123, 124–128, 129–133, 134–138, 139–143, 144–148, 149–153, 154–158, 159–163, 164–168, and 169–173. The tract at residues 20–173 is 30 X 5 AA repeats of C-C-[IRQVEL]-[SPTR]-[STVQRCP]; sequence CCRPSCCQTT…CCRPCCCLRP (154 aa).

This sequence belongs to the KRTAP type 4 family. As to quaternary structure, interacts with hair keratins. In terms of tissue distribution, expressed in the hair follicles.

Its function is as follows. In the hair cortex, hair keratin intermediate filaments are embedded in an interfilamentous matrix, consisting of hair keratin-associated proteins (KRTAP), which are essential for the formation of a rigid and resistant hair shaft through their extensive disulfide bond cross-linking with abundant cysteine residues of hair keratins. The matrix proteins include the high-sulfur and high-glycine-tyrosine keratins. This chain is Keratin-associated protein 4-6 (KRTAP4-6), found in Homo sapiens (Human).